Consider the following 144-residue polypeptide: Actin-associated protein FAM107A (144 aa).

The stretch at 66–112 forms a coiled coil; the sequence is ELQRVLEHRRRNQLIKKKKEELEAKRLQCPFEQELLRRQQRLNQLEK. Positions 74–84 match the Nuclear localization signal motif; the sequence is RRRNQLIKKKK. Positions 105–124 are disordered; sequence QRLNQLEKPPEKEEDHAPEF. A compositionally biased stretch (basic and acidic residues) spans 112–124; that stretch reads KPPEKEEDHAPEF.

It belongs to the FAM107 family. In terms of assembly, interacts with ACTB. Interacts with COMMD1; this interaction stabilizes COMMD1 in the nucleus. Interacts with MAP1A. Interacts with PRDX1. Interacts with F-actin. Widely expressed. Expressed in neurons. Expressed in malignant glial tumors. Expression is reduced or absent in a number of cancer cell lines.

It localises to the nucleus. It is found in the cytoplasm. The protein resides in the cytoskeleton. The protein localises to the stress fiber. Its subcellular location is the cell junction. It localises to the focal adhesion. It is found in the cell projection. The protein resides in the ruffle membrane. The protein localises to the synapse. Its function is as follows. Stress-inducible actin-binding protein that plays a role in synaptic and cognitive functions by modulating actin filamentous (F-actin) dynamics. Mediates polymerization of globular actin to F-actin. Also binds to, stabilizes and bundles F-actin. Involved in synaptic function by regulating neurite outgrowth in an actin-dependent manner and for the acquisition of hippocampus-dependent cognitive function, such as learning and long-term memory. Plays a role in the actin and microtubule cytoskeleton organization; negatively regulates focal adhesion (FA) assembly promoting malignant glial cell migration in an actin-, microtubule- and MAP1A-dependent manner. Also involved in neuroblastoma G1/S phase cell cycle progression and cell proliferation inhibition by stimulating ubiquitination of NF-kappa-B subunit RELA and NF-kappa-B degradation in a COMMD1- and actin-dependent manner. May play a role in tumor development. The chain is Actin-associated protein FAM107A from Homo sapiens (Human).